The following is a 632-amino-acid chain: MSTEPEGVESDSNADFAINASSFDYGMAHTSETLADPMSFQAQDLVVNLTGVERKVFVSARDDKDSLCNGVDFDADSDLLKNKDKKGFSKENLKLFDSDLVWAKLRSYPWWPGLVFDKSVASKAAMRHFKKGNVLVAYFGDCTFAWNNASQIKPFHQNFSQMQEQSNSAEFRDAIDCALDEVSRRVEFGLSCSCVSEEAYNKLKTQNIINAGIREDSSVRYGGDKLSDGISFEPAKLVDYMKHLACFPCYDATEKLQFVINRAQVLAFQQWKDYSHFIDYETFVRSVESAATLASLPEVNMDEGISAKKRKTDYKDNAEQTKEKTLSDLTVKKRCGSRSTEKLDGKSHSEKKRKVESSESGKSEKRIKKSQQKEDSVSKHSNEESLLSVGDTNKLQKTAEPCHGTGVENEMNSLTPTLKPCRASKSTEVENEKTKKPRHQELAERKISSPDEMLSSLHAANTSTGIPDSINIDPSNYEDFEKFINELFCSKLNGDSKKASITETSEPCDKKDSAEEEILPANKEITGSGSKEQIGLKDCSADSLPPYALVLNFADSGSVPSEEKLNEIFKRYGPLHESKTKVTMKGKRAKVVFKRGEDAKTAFSSAGKYSIFGPSLLSYRLEYVCPKRKKTT.

A PWWP domain is found at 97–158; that stretch reads DSDLVWAKLR…ASQIKPFHQN (62 aa). Residues 310–452 form a disordered region; it reads RKTDYKDNAE…AERKISSPDE (143 aa). 4 stretches are compositionally biased toward basic and acidic residues: residues 313–326, 339–364, 371–383, and 425–449; these read DYKD…EKTL, STEK…GKSE, QQKE…HSNE, and KSTE…KISS. A Nuclear localization signal motif is present at residues 352 to 359; the sequence is KRKVESSE.

This sequence belongs to the PDP family. As to quaternary structure, component of the PRC2 (polycomb repressive complex 2) complex which regulates histone methylation on histone H3K27.

The protein localises to the nucleus. In terms of biological role, may influence gene expression by regulating the function of the PRC2 complex and modulating H3K27me3 level. The chain is PWWP domain-containing protein 5 from Arabidopsis thaliana (Mouse-ear cress).